A 367-amino-acid chain; its full sequence is Peptide chain release factor 2 (367 aa).

Gln250 bears the N5-methylglutamine mark.

Belongs to the prokaryotic/mitochondrial release factor family. In terms of processing, methylated by PrmC. Methylation increases the termination efficiency of RF2.

The protein localises to the cytoplasm. Peptide chain release factor 2 directs the termination of translation in response to the peptide chain termination codons UGA and UAA. This Kineococcus radiotolerans (strain ATCC BAA-149 / DSM 14245 / SRS30216) protein is Peptide chain release factor 2.